Reading from the N-terminus, the 161-residue chain is 6,7-dimethyl-8-ribityllumazine synthase (161 aa).

5-amino-6-(D-ribitylamino)uracil contacts are provided by residues W25, 57-59 (AFE), and 80-82 (VVI). 85-86 (GT) is a binding site for (2S)-2-hydroxy-3-oxobutyl phosphate. Residue H88 is the Proton donor of the active site. 5-amino-6-(D-ribitylamino)uracil is bound at residue F113. R127 lines the (2S)-2-hydroxy-3-oxobutyl phosphate pocket.

This sequence belongs to the DMRL synthase family.

It catalyses the reaction (2S)-2-hydroxy-3-oxobutyl phosphate + 5-amino-6-(D-ribitylamino)uracil = 6,7-dimethyl-8-(1-D-ribityl)lumazine + phosphate + 2 H2O + H(+). The protein operates within cofactor biosynthesis; riboflavin biosynthesis; riboflavin from 2-hydroxy-3-oxobutyl phosphate and 5-amino-6-(D-ribitylamino)uracil: step 1/2. Its function is as follows. Catalyzes the formation of 6,7-dimethyl-8-ribityllumazine by condensation of 5-amino-6-(D-ribitylamino)uracil with 3,4-dihydroxy-2-butanone 4-phosphate. This is the penultimate step in the biosynthesis of riboflavin. In Kineococcus radiotolerans (strain ATCC BAA-149 / DSM 14245 / SRS30216), this protein is 6,7-dimethyl-8-ribityllumazine synthase.